Consider the following 46-residue polypeptide: MRPFLQEYLMRRLLHYLINNIREHLMLYLFLWGLLAIMDLIYVFYF.

This is an uncharacterized protein from Escherichia coli (strain K12).